Here is a 438-residue protein sequence, read N- to C-terminus: Minor capsid protein p49 (438 aa).

The tract at residues 134–167 (PQVSGLKDTQKNCLTQPSSLPSLKNPKNSSVPST) is disordered. Positions 144 to 167 (KNCLTQPSSLPSLKNPKNSSVPST) are enriched in polar residues.

This sequence belongs to the asfivirus p49 structural protein family.

Its subcellular location is the virion. In terms of biological role, together with the penton and the other minor capsid proteins (M1249L, p17), forms a complicated network immediately below the outer capsid shell, stabilizing the whole capsid. Plays an essential role in the formation of infectious virus particles. Especially required for the formation of the capsid vertices. During virion assembly, associates with the membrane and probably mediates the docking of the penton complex to the inner membrane, where it recruits the capsomers to form the penton core. The polypeptide is Minor capsid protein p49 (Ornithodoros (relapsing fever ticks)).